Consider the following 204-residue polypeptide: Small rubber particle protein (204 aa).

The protein belongs to the REF/SRPP family. As to quaternary structure, auto-assembles in solution into stable nanomultimers of a globular nature. Not glycosylated. Post-translationally, the N-terminus is blocked. In terms of processing, consistent shifts of about 266 Da observed by MS in various forms of the intact protein suggest the addition of stearolyl groups. As to expression, highly expressed in the specialized vessel laticifers, but localized only in the laticifer layers in the conducting phloem. Also detected in leaves.

It is found in the cytoplasm. Its function is as follows. Involved in the biosynthesis of rubber, an isoprenoid polymer (cis-1,4-polyisoprene). The chain is Small rubber particle protein from Hevea brasiliensis (Para rubber tree).